A 440-amino-acid polypeptide reads, in one-letter code: Methylthioribose-1-phosphate isomerase (440 aa).

Residue D285 is the Proton donor of the active site.

Belongs to the eIF-2B alpha/beta/delta subunits family. MtnA subfamily.

It is found in the cytoplasm. The protein resides in the nucleus. The enzyme catalyses 5-(methylsulfanyl)-alpha-D-ribose 1-phosphate = 5-(methylsulfanyl)-D-ribulose 1-phosphate. It participates in amino-acid biosynthesis; L-methionine biosynthesis via salvage pathway; L-methionine from S-methyl-5-thio-alpha-D-ribose 1-phosphate: step 1/6. Functionally, catalyzes the interconversion of methylthioribose-1-phosphate (MTR-1-P) into methylthioribulose-1-phosphate (MTRu-1-P). This Botryotinia fuckeliana (strain B05.10) (Noble rot fungus) protein is Methylthioribose-1-phosphate isomerase (mri1).